The sequence spans 409 residues: Lissencephaly-1 homolog (409 aa).

Residues 7-39 form the LisH domain; it reads QEEELRFAVADYLQSCGYTNALEAFKKDASIPK. Residues 56 to 81 adopt a coiled-coil conformation; sequence SVVRLQKKVMDLELRLNNTTREMNSG. Over residues 75-92 the composition is skewed to polar residues; the sequence is TREMNSGVPTRNSRSSND. Positions 75–105 are disordered; it reads TREMNSGVPTRNSRSSNDWIPRPPEKHSLSG. WD repeat units lie at residues 105-146, 147-186, 189-228, 231-270, 273-332, 335-374, and 377-409; these read GHRS…RTLR, GHTD…CRMT, GHDH…CVYN, GHRE…CKEE, GHEH…CLFS, GHDN…CSKS, and AHNH…WECR.

The protein belongs to the WD repeat LIS1/nudF family.

The protein resides in the cytoplasm. Its subcellular location is the cytoskeleton. The protein localises to the microtubule organizing center. It localises to the centrosome. Positively regulates the activity of the minus-end directed microtubule motor protein dynein. May enhance dynein-mediated microtubule sliding by targeting dynein to the microtubule plus end. Required for several dynein- and microtubule-dependent processes. The protein is Lissencephaly-1 homolog of Trichoplax adhaerens (Trichoplax reptans).